Reading from the N-terminus, the 605-residue chain is Leucine aminopeptidase (605 aa).

The a peptide site is built by K374, D379, and K386. Zn(2+)-binding residues include K374 and D379. Residues 384–401 form an L13 loop region; sequence NLKAAPGSMIDLMKFDMS. Residue K386 is part of the active site. Residues D394, M396, D399, D459, and E461 each contribute to the Zn(2+) site. A peptide is bound by residues D399 and D459. R463 is an active-site residue.

The protein belongs to the peptidase M17 family. Homohexamer composed of dimer of trimers. Both the identity and concentration of metal ions available dictate the extent to which oligomerization occurs; Mn(2+) and Co(2+) induces oligomerization, whereas Mg(2+) has no effect, and Zn(2+) causes irreversible protein aggregation in vitro. Requires Zn(2+) as cofactor.

Its subcellular location is the cytoplasm. It catalyses the reaction Release of an N-terminal amino acid, Xaa-|-Yaa-, in which Xaa is preferably Leu, but may be other amino acids including Pro although not Arg or Lys, and Yaa may be Pro. Amino acid amides and methyl esters are also readily hydrolyzed, but rates on arylamides are exceedingly low.. The catalysed reaction is L-cysteinylglycine + H2O = L-cysteine + glycine. Oligomerization is required for catalytic activity and is metal-dependent. The type of metal that binds the 2 metal binding sites influences catalytic activity and substrate specificity. In vitro, activated by Co(2+), Mn(2+), Ni(2+), Mg(2+) and Zn(2+) with decreasing strength. Occupancy of the site 2 is essential and sufficient for activating the enzyme but occupation of the 2 sites is necessary for full catalytic activity. Inhibited by fungal metabolite bestatin. Inhibited by Phe-Naphthyl (PNAP). In terms of biological role, aminopeptidase which preferentially cleaves leucine residues from the N-terminus of peptides. Also, has some activity towards tryptophan and methionine and to a lesser extent towards phenylalanine. Has very low activity or no activity towards the other amino acids. In addition, cleaves the Cys-Gly dipeptide, probably as part of the glutathione regulation pathway; cleavage only occurs in the presence of Mn(2+). During the asexual blood stage, plays a role in the final step of host hemoglobin catabolism, by cleaving hemoglobin-derived oligopeptides providing a source of amino acids for the parasite protein synthesis and for the maintenance of osmotic homeostasis. During the asexual blood stage, may also play a role during the ring-trophozoite transition. The sequence is that of Leucine aminopeptidase from Plasmodium falciparum (isolate 3D7).